Here is an 85-residue protein sequence, read N- to C-terminus: Turripeptide PaIAa (85 aa).

Belongs to the turripeptide family. As to expression, expressed by the venom duct.

It is found in the secreted. Functionally, is lethal to drosophila larvae. The sequence is that of Turripeptide PaIAa from Polystira albida (White giant-turris).